Consider the following 407-residue polypeptide: Protein S-acyltransferase 8 (407 aa).

2 helical membrane-spanning segments follow: residues 29 to 49 (SLPL…VFVA) and 62 to 82 (GYAI…LLFF). The 51-residue stretch at 136-186 (KYCDTCMLYRPPRCSHCSICNNCVERFDHHCPWVGQCIGLRNYRYFFMFVS) folds into the DHHC domain. The active-site S-palmitoyl cysteine intermediate is the cysteine 166. The next 2 membrane-spanning stretches (helical) occupy residues 181-201 (FFMF…MSAV) and 224-244 (AVVL…LTAF). A disordered region spans residues 348 to 368 (AEDANNNQPHHTLDIDHERAG). The segment covering 358 to 368 (HTLDIDHERAG) has biased composition (basic and acidic residues). Position 385 is a phosphoserine (serine 385).

The protein belongs to the DHHC palmitoyltransferase family. Expressed in flowers and pollen.

The protein localises to the cell membrane. The enzyme catalyses L-cysteinyl-[protein] + hexadecanoyl-CoA = S-hexadecanoyl-L-cysteinyl-[protein] + CoA. In terms of biological role, S-acyltransferase involved in protein lipid modification. This chain is Protein S-acyltransferase 8 (PAT08), found in Arabidopsis thaliana (Mouse-ear cress).